We begin with the raw amino-acid sequence, 215 residues long: Ankyrin repeat domain-containing protein 49 (215 aa).

ANK repeat units lie at residues 81-110 (DGYT…NPNA) and 114-143 (LGWT…DVNA).

In terms of assembly, interacts with Bdbt; interaction promotes the stability of both complex members.

The protein localises to the cytoplasm. It is found in the cytosol. It localises to the cell membrane. Functionally, required for regulating the establishment of planar cell polarity in the wing. Forms a complex with Bdbt which likely functions in the regulation of planar polarity by promoting the activity of Dco during planar polarity establishment. Within the complex, probably functions to stabilize Bdbt, while Bdbt directly promotes Dco activity in regulating phosphorylation of core proteins such as dsh, and asymmetric localization. In Drosophila melanogaster (Fruit fly), this protein is Ankyrin repeat domain-containing protein 49.